The chain runs to 116 residues: Spexin (116 aa).

The N-terminal stretch at 1–26 is a signal peptide; sequence MKGPSVLAVTAVVLLLVLSALENSSG. Residues 27-35 constitute a propeptide that is removed on maturation; sequence APQRLSEKR. Gln-49 is modified (glutamine amide). Propeptides lie at residues 50 to 116 and 74 to 116; these read GRRF…LFNW and PDLE…LFNW. The tract at residues 52–77 is disordered; sequence RFLSDQSRRKELADRPPPERRNPDLE. Residues 53–75 show a composition bias toward basic and acidic residues; the sequence is FLSDQSRRKELADRPPPERRNPD.

This sequence belongs to the spexin family.

It localises to the secreted. Its subcellular location is the extracellular space. The protein localises to the cytoplasmic vesicle. The protein resides in the secretory vesicle. Its function is as follows. Plays a role as a central modulator of cardiovascular and renal function and nociception. Also plays a role in energy metabolism and storage. Inhibits adrenocortical cell proliferation with minor stimulation on corticosteroid release. Acts as a ligand for galanin receptors GALR2 and GALR3. Intracerebroventricular administration of the peptide induces an increase in arterial blood pressure, a decrease in both heart rate and renal excretion and delayed natriuresis. Intraventricular administration of the peptide induces antinociceptive activity. Also induces contraction of muscarinic-like stomach smooth muscles. Intraperitoneal administration of the peptide induces a reduction in food consumption and body weight. Inhibits long chain fatty acid uptake into adipocytes. In terms of biological role, intracerebroventricular administration of the peptide induces a decrease in heart rate, but no change in arterial pressure, and an increase in urine flow rate. Intraventricular administration of the peptide induces antinociceptive activity. The polypeptide is Spexin (Spx) (Mus musculus (Mouse)).